A 341-amino-acid chain; its full sequence is Phenylalanine--tRNA ligase alpha subunit (341 aa).

Glu254 lines the Mg(2+) pocket.

The protein belongs to the class-II aminoacyl-tRNA synthetase family. Phe-tRNA synthetase alpha subunit type 1 subfamily. Tetramer of two alpha and two beta subunits. It depends on Mg(2+) as a cofactor.

It is found in the cytoplasm. The enzyme catalyses tRNA(Phe) + L-phenylalanine + ATP = L-phenylalanyl-tRNA(Phe) + AMP + diphosphate + H(+). The protein is Phenylalanine--tRNA ligase alpha subunit of Chlorobium limicola (strain DSM 245 / NBRC 103803 / 6330).